The primary structure comprises 942 residues: Homeobox transcription factor phx1 (942 aa).

4 stretches are compositionally biased toward polar residues: residues 1-19 (MRSY…NINY), 61-73 (HLQG…TNPN), 99-116 (ADNN…TNPS), and 122-135 (IVKS…SKQN). 5 disordered regions span residues 1–54 (MRSY…MQLP), 61–80 (HLQG…PEFD), 87–172 (KQEK…KKQR), 604–651 (WANQ…STST), and 892–922 (SSSG…DVYS). Basic and acidic residues predominate over residues 142-151 (SVEKAKENVA). Positions 153–164 (ESGTPESGGSTS) are enriched in low complexity. Residues 164–224 (SAPKSKKQRL…QNRRAKSKLI (61 aa)) constitute a DNA-binding region (homeobox). Polar residues-rich tracts occupy residues 604 to 614 (WANQLPRQPDS) and 630 to 641 (SHDTSSEYGNKS).

The protein resides in the nucleus. In terms of biological role, trnascription factor that regulates the expression of the homocitrate synthase (HCS) lys4. The sequence is that of Homeobox transcription factor phx1 (phx1) from Schizosaccharomyces pombe (strain 972 / ATCC 24843) (Fission yeast).